A 187-amino-acid chain; its full sequence is Large ribosomal subunit protein uL6 (187 aa).

This sequence belongs to the universal ribosomal protein uL6 family. Part of the 50S ribosomal subunit.

Its function is as follows. This protein binds to the 23S rRNA, and is important in its secondary structure. It is located near the subunit interface in the base of the L7/L12 stalk, and near the tRNA binding site of the peptidyltransferase center. The sequence is that of Large ribosomal subunit protein uL6 from Chloroflexus aggregans (strain MD-66 / DSM 9485).